Reading from the N-terminus, the 74-residue chain is Amphipathic peptide CT1 (74 aa).

The signal sequence occupies residues methionine 1–glycine 23. Residue valine 37 is modified to Valine amide. A propeptide spanning residues glycine 41–arginine 74 is cleaved from the precursor.

The protein belongs to the non-disulfide-bridged peptide (NDBP) superfamily. Short antimicrobial peptide (group 4) family. As to expression, expressed by the venom gland.

The protein resides in the secreted. The protein localises to the target cell membrane. Antimicrobial peptide that is rapidly bactericidal against Gram-positive bacteria (MIC=12.5 ug/ml against S.aureus, and MIC=100 ug/ml against M.luteus). Is also active against clinical antibiotics-resistant bacterial strains. The protein is Amphipathic peptide CT1 of Scorpiops tibetanus (Scorpion).